The primary structure comprises 918 residues: Glutamate receptor ionotropic, kainate 1 (918 aa).

An N-terminal signal peptide occupies residues 1–30 (MELGTLLAQPGLWTRDTSWALLYFLCYILP). The Extracellular segment spans residues 31–576 (QTAPQVLRIG…VFSFLNPLSP (546 aa)). Residues Asn68, Asn74, Asn276, Asn379, Asn428, Asn439, and Asn446 are each glycosylated (N-linked (GlcNAc...) asparagine). L-glutamate contacts are provided by Pro531, Thr533, and Arg538. N-linked (GlcNAc...) asparagine glycosylation occurs at Asn561. The helical transmembrane segment at 577–597 (DIWMYVLLACLGVSCVLFVIA) threads the bilayer. Residues 598-653 (RFTPYEWYNPHPCNPDSDVVENNFTLLNSFWFGVGALMQQGSELMPKALSTRIVGG) lie on the Cytoplasmic side of the membrane. A helical transmembrane segment spans residues 654–674 (IWWFFTLIIISSYTANLAAFL). Residues 675 to 834 (TVERMESPID…KEASALGVEN (160 aa)) lie on the Extracellular side of the membrane. Residues Ser704 and Thr705 each coordinate L-glutamate. Ser725 carries the phosphoserine; by PKC modification. Glu753 contacts L-glutamate. Thr761 is modified (phosphothreonine; by PKC). Cys765 and Cys819 are disulfide-bonded. Residue Asn766 is glycosylated (N-linked (GlcNAc...) asparagine). Residues 835 to 855 (IGGIFIVLAAGLVLSVFVAIG) traverse the membrane as a helical segment. Residues 856-918 (EFIYKSRKNN…IRKQSSVHTV (63 aa)) are Cytoplasmic-facing.

This sequence belongs to the glutamate-gated ion channel (TC 1.A.10.1) family. GRIK1 subfamily. In terms of assembly, homotetramer or heterotetramer of pore-forming glutamate receptor subunits. Tetramers may be formed by the dimerization of dimers. Can form functional heteromeric receptors with GRIK4 and GRIK5. Interacts with KLHL17.

The protein localises to the cell membrane. It localises to the postsynaptic cell membrane. The enzyme catalyses Ca(2+)(in) = Ca(2+)(out). Functionally, ionotropic glutamate receptor that functions as a cation-permeable ligand-gated ion channel, gated by L-glutamate and the glutamatergic agonist kainic acid. L-glutamate acts as an excitatory neurotransmitter at many synapses in the central nervous system. Binding of the excitatory neurotransmitter L-glutamate induces a conformation change, leading to the opening of the cation channel, and thereby converts the chemical signal to an electrical impulse. The receptor then desensitizes rapidly and enters a transient inactive state, characterized by the presence of bound agonist. This chain is Glutamate receptor ionotropic, kainate 1 (GRIK1), found in Macaca fascicularis (Crab-eating macaque).